A 431-amino-acid chain; its full sequence is SPI-1 type 3 secretion system ATPase (431 aa).

ATP is bound at residue 162–167 (GCGKTM).

This sequence belongs to the ATPase alpha/beta chains family. T3SS ATPase subfamily. As to quaternary structure, the core secretion machinery of the T3SS is composed of approximately 20 different proteins, including cytoplasmic components, a base, an export apparatus and a needle. This subunit is part of the cytosolic complex. Forms homohexamers.

It is found in the cytoplasm. It carries out the reaction ATP + H2O + cellular proteinSide 1 = ADP + phosphate + cellular proteinSide 2.. Its function is as follows. ATPase component of the type III secretion system (T3SS), also called injectisome, which is used to inject bacterial effector proteins into eukaryotic host cells. Acts as a molecular motor to provide the energy that is required for the export of proteins. Required for type III secretion apparatus (T3SA) formation, proper protein secretion, host cell invasion and virulence. May play a critical role in T3SS substrate recognition, disassembly of the effector/chaperone complex and unfolding of the effector in an ATP-dependent manner prior to secretion. This is SPI-1 type 3 secretion system ATPase from Salmonella typhi.